A 261-amino-acid polypeptide reads, in one-letter code: Potassium/proton antiporter CemA (261 aa).

2 consecutive transmembrane segments (helical) span residues 47-67 (FLVF…GPWV) and 138-158 (IISH…YFIM).

This sequence belongs to the CemA family.

It is found in the plastid. The protein resides in the chloroplast inner membrane. It carries out the reaction K(+)(in) + H(+)(out) = K(+)(out) + H(+)(in). In terms of biological role, contributes to K(+)/H(+) antiport activity by supporting proton efflux to control proton extrusion and homeostasis in chloroplasts in a light-dependent manner to modulate photosynthesis. Prevents excessive induction of non-photochemical quenching (NPQ) under continuous-light conditions. Indirectly promotes efficient inorganic carbon uptake into chloroplasts. The polypeptide is Potassium/proton antiporter CemA (Ginkgo biloba (Ginkgo)).